A 231-amino-acid chain; its full sequence is NifU-like protein 1, chloroplastic (231 aa).

The N-terminal 69 residues, 1 to 69, are a transit peptide targeting the chloroplast; the sequence is MMASLATSIS…SSQGEKISPL (69 aa).

It belongs to the NifU family. In terms of assembly, homodimer; disulfide-linked. Predominantly expressed in floral stalks and siliques. Expressed in leaves, cauline leaves, flower stalks and flowers (at protein level).

It is found in the plastid. It localises to the chloroplast stroma. Molecular scaffold for [Fe-S] cluster assembly of chloroplastic iron-sulfur proteins. The chain is NifU-like protein 1, chloroplastic (NIFU1) from Arabidopsis thaliana (Mouse-ear cress).